Here is a 359-residue protein sequence, read N- to C-terminus: MRVLVAMSGGVDSSVAAARMVDAGHDVVGVHLALSATPGTLRTGSRGCCSKEDAGDARRVADVLDIPFYVWDFADRFKEDVIDDFVASYERGETPNPCVRCNEKIKFSALAGRALALGFDALATGHYARLSDGRLRRAVDADKDQSYVLAVLTAQQLRHAVFPIGDTPKAQIRAEAAERGLAVADKPDSHDICFIPSGDTRAFLGARIGVRRGAVVDAGGTKLAEHEGVHGFTIGQRKGLGIAGPGPDGQPRYVTGIDAATGTVRVGGAEDLDVSRLTGERPVFTSGAAFGGPVECQVQVRAHGGLADAVASHDAGVLSVELRAPLRGVAAGQTMVIYRPDPEGDEVLASATISGAAGR.

ATP-binding positions include 6-13 (AMSGGVDS) and Leu32. The active-site Nucleophile is Cys101. The cysteines at positions 101 and 193 are disulfide-linked. Residue Gly125 participates in ATP binding. Residues 143–145 (KDQ) are interaction with tRNA. Cys193 (cysteine persulfide intermediate) is an active-site residue.

The protein belongs to the MnmA/TRMU family.

It localises to the cytoplasm. It carries out the reaction S-sulfanyl-L-cysteinyl-[protein] + uridine(34) in tRNA + AH2 + ATP = 2-thiouridine(34) in tRNA + L-cysteinyl-[protein] + A + AMP + diphosphate + H(+). Catalyzes the 2-thiolation of uridine at the wobble position (U34) of tRNA, leading to the formation of s(2)U34. The polypeptide is tRNA-specific 2-thiouridylase MnmA (Mycobacterium sp. (strain JLS)).